Here is a 216-residue protein sequence, read N- to C-terminus: Large ribosomal subunit protein uL1 (216 aa).

Belongs to the universal ribosomal protein uL1 family.

In Caenorhabditis elegans, this protein is Large ribosomal subunit protein uL1.